The chain runs to 235 residues: MNKNVMVKGLTALTILTSLGFAENISNQPHSIAKAEKNVKEITDATKAPYNSVVAFAGGTGVVVGKNTIVTNKHIAKSNDIFKNRVAAHYSSKGKGGGNYDVKDIVEYPGKEDLAIVHVHETSTEGLNFNKNVSYTKFAEGAKAKDRISVIGYPKGAQTKYKMFESTGTINHISGTFIEFDAYAQPGNSGSPVLNSKHELIGILYAGSGKDESEKNFGVYFTPQLKEFIQNNIEK.

A signal peptide spans 1–35; that stretch reads MNKNVMVKGLTALTILTSLGFAENISNQPHSIAKA. Residues His74, Asp113, and Ser189 each act as charge relay system in the active site.

Belongs to the peptidase S1B family.

It is found in the secreted. The protein is Serine protease SplA (splA) of Staphylococcus aureus (strain Mu3 / ATCC 700698).